We begin with the raw amino-acid sequence, 39 residues long: Large ribosomal subunit protein bL36 (39 aa).

Belongs to the bacterial ribosomal protein bL36 family.

In Pediococcus pentosaceus (strain ATCC 25745 / CCUG 21536 / LMG 10740 / 183-1w), this protein is Large ribosomal subunit protein bL36.